The sequence spans 102 residues: Putative pterin-4-alpha-carbinolamine dehydratase (102 aa).

The protein belongs to the pterin-4-alpha-carbinolamine dehydratase family.

It catalyses the reaction (4aS,6R)-4a-hydroxy-L-erythro-5,6,7,8-tetrahydrobiopterin = (6R)-L-erythro-6,7-dihydrobiopterin + H2O. This chain is Putative pterin-4-alpha-carbinolamine dehydratase, found in Burkholderia ambifaria (strain MC40-6).